The primary structure comprises 341 residues: tRNA N6-adenosine threonylcarbamoyltransferase (341 aa).

Residues His-111 and His-115 each coordinate Fe cation. Residues 134–138 (LVSGG), Asp-167, Gly-180, and Asn-276 each bind substrate. Asp-304 contacts Fe cation.

This sequence belongs to the KAE1 / TsaD family. It depends on Fe(2+) as a cofactor.

It localises to the cytoplasm. It catalyses the reaction L-threonylcarbamoyladenylate + adenosine(37) in tRNA = N(6)-L-threonylcarbamoyladenosine(37) in tRNA + AMP + H(+). In terms of biological role, required for the formation of a threonylcarbamoyl group on adenosine at position 37 (t(6)A37) in tRNAs that read codons beginning with adenine. Is involved in the transfer of the threonylcarbamoyl moiety of threonylcarbamoyl-AMP (TC-AMP) to the N6 group of A37, together with TsaE and TsaB. TsaD likely plays a direct catalytic role in this reaction. The protein is tRNA N6-adenosine threonylcarbamoyltransferase of Azotobacter vinelandii (strain DJ / ATCC BAA-1303).